The primary structure comprises 366 residues: 3-isopropylmalate dehydrogenase (366 aa).

78-91 (GPKWEDLPSHLQPE) lines the NAD(+) pocket. Substrate contacts are provided by Arg-99, Arg-109, Arg-138, and Asp-227. Residues Asp-227, Asp-251, and Asp-255 each coordinate Mg(2+). 285 to 297 (GSAPDIKGKNIAN) contributes to the NAD(+) binding site.

The protein belongs to the isocitrate and isopropylmalate dehydrogenases family. LeuB type 1 subfamily. As to quaternary structure, homodimer. It depends on Mg(2+) as a cofactor. Mn(2+) serves as cofactor.

It localises to the cytoplasm. The enzyme catalyses (2R,3S)-3-isopropylmalate + NAD(+) = 4-methyl-2-oxopentanoate + CO2 + NADH. It participates in amino-acid biosynthesis; L-leucine biosynthesis; L-leucine from 3-methyl-2-oxobutanoate: step 3/4. Functionally, catalyzes the oxidation of 3-carboxy-2-hydroxy-4-methylpentanoate (3-isopropylmalate) to 3-carboxy-4-methyl-2-oxopentanoate. The product decarboxylates to 4-methyl-2 oxopentanoate. This Buchnera aphidicola subsp. Baizongia pistaciae (strain Bp) protein is 3-isopropylmalate dehydrogenase.